The primary structure comprises 332 residues: tRNA uridine(34) hydroxylase (332 aa).

One can recognise a Rhodanese domain in the interval 127–221; sequence SDPETVLIDT…YLEEVPKEKS (95 aa). Cys-181 acts as the Cysteine persulfide intermediate in catalysis. Positions 308-332 are disordered; that stretch reads AKKLAQLNKQKKQQAKEAARKKAQQ. Over residues 321–332 the composition is skewed to basic and acidic residues; sequence QAKEAARKKAQQ.

The protein belongs to the TrhO family.

It catalyses the reaction uridine(34) in tRNA + AH2 + O2 = 5-hydroxyuridine(34) in tRNA + A + H2O. Functionally, catalyzes oxygen-dependent 5-hydroxyuridine (ho5U) modification at position 34 in tRNAs. This is tRNA uridine(34) hydroxylase from Francisella tularensis subsp. tularensis (strain FSC 198).